The following is a 192-amino-acid chain: Cytidylate kinase (192 aa).

ATP is bound at residue Gly7–Thr15.

This sequence belongs to the cytidylate kinase family. Type 2 subfamily.

The protein resides in the cytoplasm. The catalysed reaction is CMP + ATP = CDP + ADP. It carries out the reaction dCMP + ATP = dCDP + ADP. In Natronomonas pharaonis (strain ATCC 35678 / DSM 2160 / CIP 103997 / JCM 8858 / NBRC 14720 / NCIMB 2260 / Gabara) (Halobacterium pharaonis), this protein is Cytidylate kinase.